We begin with the raw amino-acid sequence, 878 residues long: Phosphoenolpyruvate carboxylase (878 aa).

Catalysis depends on residues His137 and Lys545.

Belongs to the PEPCase type 1 family. Mg(2+) serves as cofactor.

It carries out the reaction oxaloacetate + phosphate = phosphoenolpyruvate + hydrogencarbonate. Functionally, forms oxaloacetate, a four-carbon dicarboxylic acid source for the tricarboxylic acid cycle. In Yersinia pseudotuberculosis serotype O:1b (strain IP 31758), this protein is Phosphoenolpyruvate carboxylase.